The chain runs to 156 residues: Small ribosomal subunit protein uS7 (156 aa).

Belongs to the universal ribosomal protein uS7 family. In terms of assembly, part of the 30S ribosomal subunit. Contacts proteins S9 and S11.

One of the primary rRNA binding proteins, it binds directly to 16S rRNA where it nucleates assembly of the head domain of the 30S subunit. Is located at the subunit interface close to the decoding center, probably blocks exit of the E-site tRNA. The chain is Small ribosomal subunit protein uS7 from Clavibacter michiganensis subsp. michiganensis (strain NCPPB 382).